Consider the following 192-residue polypeptide: Recombination protein RecR (192 aa).

A C4-type zinc finger spans residues 51 to 66 (CQTCFHLSADPECEIC). Residues 74 to 168 (GLICVVADSR…PVSRIAYGLP (95 aa)) enclose the Toprim domain.

This sequence belongs to the RecR family.

Its function is as follows. May play a role in DNA repair. It seems to be involved in an RecBC-independent recombinational process of DNA repair. It may act with RecF and RecO. This is Recombination protein RecR from Parasynechococcus marenigrum (strain WH8102).